The primary structure comprises 209 residues: Isopentenyl-diphosphate Delta-isomerase (209 aa).

The Mn(2+) site is built by H31 and H38. Positions P36–A171 constitute a Nudix hydrolase domain. Residue C73 is part of the active site. C73 lines the Mg(2+) pocket. Mn(2+) is bound at residue H75. A Mg(2+)-binding site is contributed by E93. Mn(2+) is bound by residues E120 and E122. The active site involves E122.

The protein belongs to the IPP isomerase type 1 family. The cofactor is Mg(2+). Mn(2+) serves as cofactor.

It localises to the cytoplasm. The enzyme catalyses isopentenyl diphosphate = dimethylallyl diphosphate. It functions in the pathway isoprenoid biosynthesis; dimethylallyl diphosphate biosynthesis; dimethylallyl diphosphate from isopentenyl diphosphate: step 1/1. Functionally, catalyzes the 1,3-allylic rearrangement of the homoallylic substrate isopentenyl (IPP) to its highly electrophilic allylic isomer, dimethylallyl diphosphate (DMAPP). This chain is Isopentenyl-diphosphate Delta-isomerase, found in Rhizobium rhizogenes (Agrobacterium rhizogenes).